The chain runs to 462 residues: Ribosomal protein uS12 methylthiotransferase RimO (462 aa).

Positions 22–133 (ASVAFLHLGC…IIEVLQRVRQ (112 aa)) constitute an MTTase N-terminal domain. Residues Cys31, Cys67, Cys96, Cys171, Cys175, and Cys178 each coordinate [4Fe-4S] cluster. A Radical SAM core domain is found at 157–386 (TTGRFVSYLK…VAIQQPISAA (230 aa)). Residues 389–460 (QALIGQTVDV…LYDLTGEINH (72 aa)) enclose the TRAM domain.

This sequence belongs to the methylthiotransferase family. RimO subfamily. The cofactor is [4Fe-4S] cluster.

It localises to the cytoplasm. It catalyses the reaction L-aspartate(89)-[ribosomal protein uS12]-hydrogen + (sulfur carrier)-SH + AH2 + 2 S-adenosyl-L-methionine = 3-methylsulfanyl-L-aspartate(89)-[ribosomal protein uS12]-hydrogen + (sulfur carrier)-H + 5'-deoxyadenosine + L-methionine + A + S-adenosyl-L-homocysteine + 2 H(+). Functionally, catalyzes the methylthiolation of an aspartic acid residue of ribosomal protein uS12. This Prochlorococcus marinus (strain MIT 9211) protein is Ribosomal protein uS12 methylthiotransferase RimO.